Here is a 283-residue protein sequence, read N- to C-terminus: Thymidylate synthase (283 aa).

R22 lines the dUMP pocket. Residue C160 is the Nucleophile of the active site. DUMP is bound by residues 180–183 (RSCD), N191, and 221–223 (HIY). D183 contacts (6R)-5,10-methylene-5,6,7,8-tetrahydrofolate. S282 serves as a coordination point for (6R)-5,10-methylene-5,6,7,8-tetrahydrofolate.

This sequence belongs to the thymidylate synthase family. Bacterial-type ThyA subfamily. Homodimer.

The protein resides in the cytoplasm. The enzyme catalyses dUMP + (6R)-5,10-methylene-5,6,7,8-tetrahydrofolate = 7,8-dihydrofolate + dTMP. The protein operates within pyrimidine metabolism; dTTP biosynthesis. Its function is as follows. Catalyzes the reductive methylation of 2'-deoxyuridine-5'-monophosphate (dUMP) to 2'-deoxythymidine-5'-monophosphate (dTMP) while utilizing 5,10-methylenetetrahydrofolate (mTHF) as the methyl donor and reductant in the reaction, yielding dihydrofolate (DHF) as a by-product. This enzymatic reaction provides an intracellular de novo source of dTMP, an essential precursor for DNA biosynthesis. This Marinomonas sp. (strain MWYL1) protein is Thymidylate synthase.